We begin with the raw amino-acid sequence, 509 residues long: Scavenger receptor class B member 1 (509 aa).

Topologically, residues 1–11 (MGVSSRARWVA) are cytoplasmic. The chain crosses the membrane as a helical span at residues 12–32 (LGLGVLGLLCAALGVIMILMV). Over 33-440 (PSLIKQQVLK…YTQLVLMPQV (408 aa)) the chain is Extracellular. 10 N-linked (GlcNAc...) asparagine glycosylation sites follow: asparagine 102, asparagine 108, asparagine 116, asparagine 173, asparagine 212, asparagine 227, asparagine 255, asparagine 310, asparagine 330, and asparagine 383. Cysteine 251 and cysteine 384 are joined by a disulfide. A helical transmembrane segment spans residues 441 to 461 (LHYAQYVLLGLGGLLLLVPII). At 462-509 (YQLRSQEKCFLFWSGSKKGSQDKEAMQAYSESLMSPAAKGTVLQEAKL) the chain is on the cytoplasmic side.

Belongs to the CD36 family. As to quaternary structure, the C-terminal region binds to PDZK1. Post-translationally, N-glycosylated. In terms of processing, the six cysteines of the extracellular domain are all involved in intramolecular disulfide bonds.

Its subcellular location is the cell membrane. The protein resides in the membrane. The protein localises to the caveola. Its function is as follows. Receptor for different ligands such as phospholipids, cholesterol ester, lipoproteins, phosphatidylserine and apoptotic cells. Receptor for HDL, mediating selective uptake of cholesteryl ether and HDL-dependent cholesterol efflux. Also facilitates the flux of free and esterified cholesterol between the cell surface and apoB-containing lipoproteins and modified lipoproteins, although less efficiently than HDL. May be involved in the phagocytosis of apoptotic cells, via its phosphatidylserine binding activity. The protein is Scavenger receptor class B member 1 (Scarb1) of Rattus norvegicus (Rat).